An 87-amino-acid chain; its full sequence is Large ribosomal subunit protein bL31B (87 aa).

Belongs to the bacterial ribosomal protein bL31 family. Type B subfamily. Part of the 50S ribosomal subunit.

The protein is Large ribosomal subunit protein bL31B of Salinispora arenicola (strain CNS-205).